Consider the following 353-residue polypeptide: Ubiquinol oxidase 2, mitochondrial (353 aa).

A mitochondrion-targeting transit peptide spans 1-21; sequence MSQLITKAALRVLLVCGRGNC. The helical transmembrane segment at 178–198 threads the bilayer; it reads AMMLETVAAVPGMVGGMLLHL. The Fe cation site is built by E182, E221, and H224. The helical transmembrane segment at 240 to 260 threads the bilayer; it reads LLVMLVQGIFFNSFFVCYVIS. 3 residues coordinate Fe cation: E272, E323, and H326.

This sequence belongs to the alternative oxidase family. In terms of assembly, homodimer; disulfide-linked. It depends on Fe cation as a cofactor. In terms of tissue distribution, maximally expressed in dry seeds. Detected in roots, stems and leaves.

It localises to the mitochondrion inner membrane. The catalysed reaction is 2 a ubiquinol + O2 = 2 a ubiquinone + 2 H2O. Functionally, catalyzes the cyanide-resistant oxidation of ubiquinol and the reduction of molecular oxygen to water, but does not translocate protons and consequently is not linked to oxidative phosphorylation. May increase respiration when the cytochrome respiratory pathway is restricted, or in response to low temperatures. This chain is Ubiquinol oxidase 2, mitochondrial (AOX2), found in Arabidopsis thaliana (Mouse-ear cress).